The primary structure comprises 72 residues: uncharacterized protein (72 aa).

Residues 15–62 (NNNYNNNNNNNNNNNNNNNNNNNNNNNNNNININNNNNNNNNNNNNNN) form a disordered region.

This is an uncharacterized protein from Dictyostelium discoideum (Social amoeba).